Reading from the N-terminus, the 1350-residue chain is Tectonin beta-propeller repeat-containing protein (1350 aa).

TECPR repeat units lie at residues 23 to 59, 233 to 271, 280 to 320, and 336 to 371; these read GAWR…VHVH, LRWT…VRTG, DSWL…FRRG, and KGWV…HRSG. Low complexity predominate over residues 396 to 415; it reads SSLSIVSRKSGGSSSTPGSK. Disordered regions lie at residues 396-420 and 671-691; these read SSLS…QSFS and SGSG…SGTF. The region spanning 816-955 is the Galectin domain; the sequence is YYNTLYNGMP…RIKLFNVLYR (140 aa). TECPR repeat units lie at residues 966 to 1000, 1187 to 1223, 1232 to 1269, and 1278 to 1322; these read MHWR…VYNG, DAWE…FRYG, DAWQ…VRKE, and SHWQ…RRCG.

It belongs to the TECPR1 family.

Functionally, involved in peroxisome biogenesis. The sequence is that of Tectonin beta-propeller repeat-containing protein (Pex23) from Drosophila melanogaster (Fruit fly).